The chain runs to 493 residues: Desmethylyatein synthase (493 aa).

Residues 1–21 (METFQCLTLFLLFISTVFILK) traverse the membrane as a helical segment. Heme is bound at residue C434.

Belongs to the cytochrome P450 family. It depends on heme as a cofactor.

Its subcellular location is the membrane. The catalysed reaction is (-)-bursehernin + reduced [NADPH--hemoprotein reductase] + O2 = (-)-5'-demethylyatein + oxidized [NADPH--hemoprotein reductase] + H2O + H(+). It participates in aromatic compound metabolism; phenylpropanoid biosynthesis. Its function is as follows. Cytochrome P450 involved in the biosynthesis of etoposide, a chemotherapeutic compound of the topoisomerase inhibitor family. Catalyzes the conversion of bursehernin to demethylyatein. This chain is Desmethylyatein synthase, found in Sinopodophyllum hexandrum (Himalayan may apple).